The following is a 393-amino-acid chain: Cytotoxic and regulatory T-cell molecule (393 aa).

The signal sequence occupies residues 1–16 (MWWGALSLLFWVPVQA). One can recognise an Ig-like V-type domain in the interval 17-111 (AFLKMETVTV…SVKTKQVRVT (95 aa)). At 17–289 (AFLKMETVTV…HTGLARRKSG (273 aa)) the chain is on the extracellular side. Cystine bridges form between cysteine 36-cysteine 96 and cysteine 139-cysteine 194. N-linked (GlcNAc...) asparagine glycans are attached at residues asparagine 85 and asparagine 176. The Ig-like C2-type domain maps to 119–208 (PTVEALVLRR…EGLHGRKLVA (90 aa)). The span at 218 to 228 (DQETSDQETSD) shows a compositional bias: acidic residues. Residues 218 to 280 (DQETSDQETS…GLSTEASAQH (63 aa)) are disordered. The span at 229 to 246 (APEQSSLSSQALQQPTST) shows a compositional bias: low complexity. Over residues 247–256 (VSMMENSSIP) the composition is skewed to polar residues. The segment covering 257 to 267 (ETDKEEKEHAT) has biased composition (basic and acidic residues). The span at 270 to 280 (PGLSTEASAQH) shows a compositional bias: polar residues. The helical transmembrane segment at 290–310 (ILLLTLVSFLIFILFIIVQLF) threads the bilayer. Topologically, residues 311 to 393 (IMKLRKAHVV…KHSRVPESIV (83 aa)) are cytoplasmic. Positions 333–356 (ESYRSRSNNEETSSQENSSQAPQS) are disordered. Residues 342 to 352 (EETSSQENSSQ) show a composition bias toward low complexity. Residues 390-393 (ESIV) carry the PDZ-binding motif.

It belongs to the nectin family. In terms of assembly, monomer. May form homodimer (via Ig-like V-type domain). Interacts (via Ig-like V-type domain) with CADM1 (via Ig-like V-type domain); the interaction competes with CRTAM homodimerization and CADM1 homodimerization. Interacts (via PDZ-binding motif) with SCRIB (via PDZ domain 3); the interaction promotes CRTAM and SCRIB polarization in a subset of CD4+ T-cells. In terms of tissue distribution, in the immune system, expression is restricted to activated class-I MHC-restricted cells, including NKT, NK and CD8+ T-cells (at protein level). Transiently expressed in activated CD8+ T-cells and a subset of activated CD4+ T-cells (at protein level). Expressed in activated intestinal T-cells, specifically intraepithelial CD4+ CD8+ T-cells, intraepithelial CD4+ T-cells and, CD8+ T-cells in the intestine epithelium, lamina propria, Peyer's Patches and mesenteric lymph nodes. Also expressed in spleen, brain and testis.

The protein localises to the cell membrane. Functionally, mediates heterophilic cell-cell adhesion which regulates the activation, differentiation and tissue retention of various T-cell subsets. Interaction with CADM1 promotes natural killer (NK) cell cytotoxicity and IFNG/interferon-gamma secretion by CD8+ T-cells in vitro as well as NK cell-mediated rejection of tumors expressing CADM1 in vivo. Regulates CD8+ T-cell proliferation in response to T-cell receptor (TCR) activation. Appears to be dispensable for CD8+ T-cell-mediated cytotoxicity. Interaction with SCRIB promotes the late phase of cellular polarization of a subset of CD4+ T-cells, which in turn regulates TCR-mediated proliferation and IFNG, IL17 and IL22 production. By interacting with CADM1 on CD8+ dendritic cells, regulates the retention of activated CD8+ T-cells within the draining lymph node. Required for the intestinal retention of intraepithelial CD4+ CD8+ T-cells and, to a lesser extent, intraepithelial and lamina propria CD8+ T-cells and CD4+ T-cells. Interaction with CADM1 promotes the adhesion to gut-associated CD103+ dendritic cells, which may facilitate the expression of gut-homing and adhesion molecules on T-cells and the conversion of CD4+ T-cells into CD4+ CD8+ T-cells. This chain is Cytotoxic and regulatory T-cell molecule, found in Mus musculus (Mouse).